The primary structure comprises 367 residues: Molybdenum import ATP-binding protein ModC (367 aa).

The region spanning 1–234 (MSSAALEVRL…PALSGGFGHE (234 aa)) is the ABC transporter domain. Position 33–40 (33–40 (GPSGAGKS)) interacts with ATP. Residues 293–366 (HISLHNILPV…IKSVAVDVLG (74 aa)) enclose the Mop domain.

The protein belongs to the ABC transporter superfamily. Molybdate importer (TC 3.A.1.8) family. The complex is composed of two ATP-binding proteins (ModC), two transmembrane proteins (ModB) and a solute-binding protein (ModA).

It is found in the cell inner membrane. The enzyme catalyses molybdate(out) + ATP + H2O = molybdate(in) + ADP + phosphate + H(+). Functionally, part of the ABC transporter complex ModABC involved in molybdenum import. Responsible for energy coupling to the transport system. In Granulibacter bethesdensis (strain ATCC BAA-1260 / CGDNIH1), this protein is Molybdenum import ATP-binding protein ModC.